Consider the following 167-residue polypeptide: Putative 4-hydroxy-4-methyl-2-oxoglutarate aldolase (167 aa).

Residues 81 to 84 (GDII) and R103 contribute to the substrate site. A divalent metal cation is bound at residue D104.

The protein belongs to the class II aldolase/RraA-like family. Homotrimer. A divalent metal cation serves as cofactor.

The catalysed reaction is 4-hydroxy-4-methyl-2-oxoglutarate = 2 pyruvate. It carries out the reaction oxaloacetate + H(+) = pyruvate + CO2. Catalyzes the aldol cleavage of 4-hydroxy-4-methyl-2-oxoglutarate (HMG) into 2 molecules of pyruvate. Also contains a secondary oxaloacetate (OAA) decarboxylase activity due to the common pyruvate enolate transition state formed following C-C bond cleavage in the retro-aldol and decarboxylation reactions. This chain is Putative 4-hydroxy-4-methyl-2-oxoglutarate aldolase, found in Corynebacterium jeikeium (strain K411).